Here is a 401-residue protein sequence, read N- to C-terminus: Nodal homolog 3-B (401 aa).

The signal sequence occupies residues 1–18 (MALLNLFFCLVFSSPLMA). The propeptide occupies 19–274 (MPPVLQGRKS…KVNGFRRLRR (256 aa)). Residues Asn168, Asn337, Asn341, and Asn344 are each glycosylated (N-linked (GlcNAc...) asparagine). Disulfide bonds link Cys299–Cys365 and Cys328–Cys396.

This sequence belongs to the TGF-beta family. Monomer. The propeptide region interacts with bmp4 in a non-covalent manner. In terms of tissue distribution, expressed in the dorsal marginal region of late blastula, becoming restricted to the dorsal blastopore lip (Spemann organizer) at the early gastrula stage.

The protein localises to the secreted. Functionally, exhibits mesoderm-dorsalizing activity and neural-inducing activity, but lacks mesoderm-inducing activity. Regulates the expression of specific mesodermal and neural genes. Induces convergent extension movements at the embryonic midline by activating the fgf signaling pathway to induce t/bra expression in the organizer region. Acts with wnt11 to induce Spemann organizer cells and induce axis formation. The unprocessed protein antagonizes bmp-signaling. The polypeptide is Nodal homolog 3-B (nodal3-b) (Xenopus laevis (African clawed frog)).